The sequence spans 172 residues: ATP synthase subunit b, chloroplastic (172 aa).

A helical membrane pass occupies residues 15 to 37 (ILATNLINLSAVLGVLIFFGKGV).

This sequence belongs to the ATPase B chain family. As to quaternary structure, F-type ATPases have 2 components, F(1) - the catalytic core - and F(0) - the membrane proton channel. F(1) has five subunits: alpha(3), beta(3), gamma(1), delta(1), epsilon(1). F(0) has four main subunits: a(1), b(1), b'(1) and c(10-14). The alpha and beta chains form an alternating ring which encloses part of the gamma chain. F(1) is attached to F(0) by a central stalk formed by the gamma and epsilon chains, while a peripheral stalk is formed by the delta, b and b' chains.

It is found in the plastid. Its subcellular location is the chloroplast thylakoid membrane. F(1)F(0) ATP synthase produces ATP from ADP in the presence of a proton or sodium gradient. F-type ATPases consist of two structural domains, F(1) containing the extramembraneous catalytic core and F(0) containing the membrane proton channel, linked together by a central stalk and a peripheral stalk. During catalysis, ATP synthesis in the catalytic domain of F(1) is coupled via a rotary mechanism of the central stalk subunits to proton translocation. Its function is as follows. Component of the F(0) channel, it forms part of the peripheral stalk, linking F(1) to F(0). This Pisum sativum (Garden pea) protein is ATP synthase subunit b, chloroplastic.